Reading from the N-terminus, the 92-residue chain is Endoribonuclease VapD homolog (92 aa).

It belongs to the VapD ribonuclease family. Homodimer.

Functionally, cleaves ssRNA, mostly between U:A. In Neisseria gonorrhoeae, this protein is Endoribonuclease VapD homolog.